The sequence spans 1100 residues: Lysylphosphatidylglycerol biosynthesis bifunctional protein LysX (1100 aa).

The interval 1-601 (MTPTSLARAR…LLHSDGTAPD (601 aa)) is phosphatidylglycerol lysyltransferase. Helical transmembrane passes span 18 to 38 (VPAA…LASV), 60 to 80 (FPDT…ALAA), 84 to 104 (IAWW…IAGL), 112 to 132 (FAEV…AFLL), 154 to 174 (LVAS…LFPG), 206 to 226 (VFVN…TAIV), and 314 to 332 (AYGW…AQAF). The lysine--tRNA ligase stretch occupies residues 602–1100 (GMGLQADLAD…TLPFPLAKPR (499 aa)). A DNA-binding region (OB) is located at residues 661–739 (VAVAGRVLRS…SLLVSGWRLI (79 aa)). Residues D1012 and E1019 each coordinate Mg(2+).

The protein in the N-terminal section; belongs to the LPG synthetase family. It in the C-terminal section; belongs to the class-II aminoacyl-tRNA synthetase family. The cofactor is Mg(2+).

It localises to the cell membrane. The enzyme catalyses tRNA(Lys) + L-lysine + ATP = L-lysyl-tRNA(Lys) + AMP + diphosphate. It catalyses the reaction L-lysyl-tRNA(Lys) + a 1,2-diacyl-sn-glycero-3-phospho-(1'-sn-glycerol) = a 1,2-diacyl-sn-glycero-3-phospho-1'-(3'-O-L-lysyl)-sn-glycerol + tRNA(Lys). Catalyzes the production of L-lysyl-tRNA(Lys)transfer and the transfer of a lysyl group from L-lysyl-tRNA(Lys) to membrane-bound phosphatidylglycerol (PG), which produces lysylphosphatidylglycerol (LPG), one of the components of the bacterial membrane with a positive net charge. LPG synthesis contributes to the resistance to cationic antimicrobial peptides (CAMPs) and likely protects M.tuberculosis against the CAMPs produced by competiting microorganisms (bacteriocins). In fact, the modification of anionic phosphatidylglycerol with positively charged L-lysine results in repulsion of the peptides. In Mycolicibacterium vanbaalenii (strain DSM 7251 / JCM 13017 / BCRC 16820 / KCTC 9966 / NRRL B-24157 / PYR-1) (Mycobacterium vanbaalenii), this protein is Lysylphosphatidylglycerol biosynthesis bifunctional protein LysX (lysX).